We begin with the raw amino-acid sequence, 1188 residues long: DNA-directed RNA polymerase subunit beta (1188 aa).

Belongs to the RNA polymerase beta chain family. In terms of assembly, the RNAP catalytic core consists of 2 alpha, 1 beta, 1 beta' and 1 omega subunit. When a sigma factor is associated with the core the holoenzyme is formed, which can initiate transcription.

The catalysed reaction is RNA(n) + a ribonucleoside 5'-triphosphate = RNA(n+1) + diphosphate. Its function is as follows. DNA-dependent RNA polymerase catalyzes the transcription of DNA into RNA using the four ribonucleoside triphosphates as substrates. The protein is DNA-directed RNA polymerase subunit beta of Streptococcus pyogenes serotype M1.